The chain runs to 277 residues: 4-hydroxy-3-methylbut-2-enyl diphosphate reductase (277 aa).

C12 is a [4Fe-4S] cluster binding site. Residues H36 and H70 each coordinate (2E)-4-hydroxy-3-methylbut-2-enyl diphosphate. Residues H36 and H70 each contribute to the dimethylallyl diphosphate site. Isopentenyl diphosphate-binding residues include H36 and H70. C92 provides a ligand contact to [4Fe-4S] cluster. H120 serves as a coordination point for (2E)-4-hydroxy-3-methylbut-2-enyl diphosphate. H120 lines the dimethylallyl diphosphate pocket. Isopentenyl diphosphate is bound at residue H120. Residue E122 is the Proton donor of the active site. T158 lines the (2E)-4-hydroxy-3-methylbut-2-enyl diphosphate pocket. C186 is a [4Fe-4S] cluster binding site. (2E)-4-hydroxy-3-methylbut-2-enyl diphosphate-binding residues include S214, N216, and S258. Residues S214, N216, and S258 each coordinate dimethylallyl diphosphate. 3 residues coordinate isopentenyl diphosphate: S214, N216, and S258.

This sequence belongs to the IspH family. [4Fe-4S] cluster is required as a cofactor.

It carries out the reaction isopentenyl diphosphate + 2 oxidized [2Fe-2S]-[ferredoxin] + H2O = (2E)-4-hydroxy-3-methylbut-2-enyl diphosphate + 2 reduced [2Fe-2S]-[ferredoxin] + 2 H(+). The catalysed reaction is dimethylallyl diphosphate + 2 oxidized [2Fe-2S]-[ferredoxin] + H2O = (2E)-4-hydroxy-3-methylbut-2-enyl diphosphate + 2 reduced [2Fe-2S]-[ferredoxin] + 2 H(+). Its pathway is isoprenoid biosynthesis; dimethylallyl diphosphate biosynthesis; dimethylallyl diphosphate from (2E)-4-hydroxy-3-methylbutenyl diphosphate: step 1/1. It participates in isoprenoid biosynthesis; isopentenyl diphosphate biosynthesis via DXP pathway; isopentenyl diphosphate from 1-deoxy-D-xylulose 5-phosphate: step 6/6. In terms of biological role, catalyzes the conversion of 1-hydroxy-2-methyl-2-(E)-butenyl 4-diphosphate (HMBPP) into a mixture of isopentenyl diphosphate (IPP) and dimethylallyl diphosphate (DMAPP). Acts in the terminal step of the DOXP/MEP pathway for isoprenoid precursor biosynthesis. This chain is 4-hydroxy-3-methylbut-2-enyl diphosphate reductase, found in Campylobacter jejuni subsp. jejuni serotype O:2 (strain ATCC 700819 / NCTC 11168).